The following is a 361-amino-acid chain: Putative pumilio homolog 22 (361 aa).

The 344-residue stretch at 5–348 folds into the PUM-HD domain; it reads RGYDLASQVL…NIVAIIDSET (344 aa). Pumilio repeat units follow at residues 27–63 and 64–103; these read HITY…EFLD and LIAQ…RLHE. The stretch at 104-131 is one Pumilio 3; degenerate repeat; it reads LMAEFDEVLSTSVTADVDKLHKLASKLM. A Pumilio 4 repeat occupies 132–167; the sequence is LDSDLFFEFVITRRGSLMIQIILGKSEEVDQVILAG. Residues 168 to 205 form a Pumilio 5; degenerate repeat; sequence VKQRFIDVTTNFYGYRIMIQTIKVFKKRGDLKVYDQIL. The stretch at 206-243 is one Pumilio 6; degenerate repeat; the sequence is RLIGVHALYLTKDPDMGNKTFQHAINLHHQDCTTFIAC. Pumilio repeat units follow at residues 244-284 and 285-319; these read GLQS…EIVK and CDED…DFFG.

The protein resides in the cytoplasm. Its function is as follows. Sequence-specific RNA-binding protein that regulates translation and mRNA stability by binding the 3'-UTR of target mRNAs. The sequence is that of Putative pumilio homolog 22 (APUM22) from Arabidopsis thaliana (Mouse-ear cress).